The chain runs to 133 residues: MKFFLNTGRTIWQGEAMEAGKNLDLYVKAAGVVYINEEDMEKLGVKEGDKVKVKSEYGEVVVYVKKATERMPEGMIYIPMGPWANCVVKPDTHSTGMPTFKGYPGFYVEVEKTDEEFLDMRSLMRKKYIEAVE.

The chain is Protein FwdD (fwdD) from Methanocaldococcus jannaschii (strain ATCC 43067 / DSM 2661 / JAL-1 / JCM 10045 / NBRC 100440) (Methanococcus jannaschii).